Reading from the N-terminus, the 777-residue chain is Protein translocase subunit SecA (777 aa).

ATP-binding positions include Gln94, Gly112–Thr116, and Asp501.

The protein belongs to the SecA family. As to quaternary structure, monomer and homodimer. Part of the essential Sec protein translocation apparatus which comprises SecA, SecYEG and auxiliary proteins SecDF. Other proteins may also be involved.

The protein localises to the cell membrane. Its subcellular location is the cytoplasm. The enzyme catalyses ATP + H2O + cellular proteinSide 1 = ADP + phosphate + cellular proteinSide 2.. Part of the Sec protein translocase complex. Interacts with the SecYEG preprotein conducting channel. Has a central role in coupling the hydrolysis of ATP to the transfer of proteins into and across the cell membrane, serving as an ATP-driven molecular motor driving the stepwise translocation of polypeptide chains across the membrane. The chain is Protein translocase subunit SecA from Mycobacterium avium (strain 104).